The primary structure comprises 671 residues: MQGPPRSLRAGLSLDDFIPGHLQSHIGSSSRGTRVPVIRNGGSNTLNFQFHDPAPRTVCNGGYTPRRDASQHPDPAWYQTWPGPGSKPSASTKIPASQHTQNWSATWTKDSKRRDKRWVKYEGIGPVDESGMPIAPRSSVDRPRDWYRRMFQQIHRKMPDLQLDWTFEEPPRDPRHLGAQQRPAHRPGPATSSSGRSWDHSEELPRSTFNYRPGAFSTVLQPSNQVLRRREKVDNVWTEESWNQFLQELETGQRPKKPLVDDPGEKPSQPIEVLLERELAELSAELDKDLRAIETRLPSPKSSPAPRRAPEQRPPAGPASAWSSSYPHAPYLGSARSLSPHKMADGGSPFLGRRDFVYPSSTRDPSASNGGGSPARREEKKRKAARLKFDFQAQSPKELTLQKGDIVYIHKEVDKNWLEGEHHGRLGIFPANYVEVLPADEIPKPIKPPTYQVLEYGEAVAQYTFKGDLEVELSFRKGEHICLIRKVNENWYEGRITGTGRQGIFPASYVQVSREPRLRLCDDGPQLPTSPRLTAAARSARHPSSPSALRSPADPIDLGGQTSPRRTGFSFPTQEPRPQTQNLGTPGPALSHSRGPSHPLDLGTSSPNTSQIHWTPYRAMYQYRPQNEDELELREGDRVDVMQQCDDGWFVGVSRRTQKFGTFPGNYVAPV.

Q2 bears the N-acetylalanine mark. Residue R6 is modified to Phosphoserine. Disordered regions lie at residues L46 to S111, T166 to A215, L249 to S268, T295 to S324, and S337 to K383. The span at P88–T108 shows a compositional bias: polar residues. Positions D115–P187 constitute a SoHo domain. A Phosphoserine modification is found at S348. A compositionally biased stretch (polar residues) spans P359 to S368. SH3 domains are found at residues K380–A439 and L454–E515. The interval K380–E515 is binds to vinculin. The residue at position 395 (S395) is a Phosphoserine. Positions R519–Q611 are disordered. S530 bears the Phosphoserine; by MAPK1 mark. A compositionally biased stretch (low complexity) spans A535–A553. A phosphoserine mark is found at S544, S545, S547, S551, and S563. Residues G560 to G584 show a composition bias toward polar residues. One can recognise an SH3 3 domain in the interval I612–V671. Residues I612–V671 form a binds to SOS region.

As to quaternary structure, interacts with DLG5 through its third SH3 domain. Interacts with vinculin by the first two SH3 domains and the proline rich region of vinculin. Binds to SOS (guanine nucleotide exchange factor of RAS and RAC), through its third SH3 domain. The formation of this complex is down-regulated by phosphorylation of SOS. Interacts with INPPL1/SHIP2, SAFB2, SOCS7 and SRCIN1. Interacts with FASLG. Interacts with MAPK1/ERK2. Phosphorylated at Ser-530 by MAPK1/ERK2 during cell spreading. In terms of tissue distribution, both isoforms are expressed in different tissues like heart, placenta, brain, skeletal muscle and pancreas. Isoform beta is especially found in liver.

The protein resides in the cell junction. Its subcellular location is the cytoplasm. The protein localises to the cytoskeleton. It is found in the nucleus. Its function is as follows. Vinexin alpha isoform promotes up-regulation of actin stress fiber formation. Vinexin beta isoform plays a role in cell spreading and enhances the activation of JNK/SAPK in response to EGF stimulation by using its third SH3 domain. The polypeptide is Vinexin (SORBS3) (Homo sapiens (Human)).